Consider the following 146-residue polypeptide: Hemoglobin subunit beta-1 (146 aa).

The Globin domain maps to 2 to 146 (KWSDKERAVI…VVSALGKQYC (145 aa)). The heme b site is built by His63 and His92.

This sequence belongs to the globin family. As to quaternary structure, hb1 is a heterotetramer of two alpha-1 chains and two beta-1 chains; Hb2 is a heterotetramer of two alpha-2 chains and two beta-1 chains. Red blood cells.

In terms of biological role, involved in oxygen transport from gills to the various peripheral tissues. This Anarhichas minor (Arctic spotted wolffish) protein is Hemoglobin subunit beta-1 (hbb1).